A 284-amino-acid chain; its full sequence is tRNA-cytidine(32) 2-sulfurtransferase (284 aa).

The short motif at 44–49 is the PP-loop motif element; the sequence is SGGKDS. Residues cysteine 119, cysteine 122, and cysteine 210 each coordinate [4Fe-4S] cluster.

The protein belongs to the TtcA family. In terms of assembly, homodimer. Mg(2+) is required as a cofactor. It depends on [4Fe-4S] cluster as a cofactor.

The protein localises to the cytoplasm. It catalyses the reaction cytidine(32) in tRNA + S-sulfanyl-L-cysteinyl-[cysteine desulfurase] + AH2 + ATP = 2-thiocytidine(32) in tRNA + L-cysteinyl-[cysteine desulfurase] + A + AMP + diphosphate + H(+). It functions in the pathway tRNA modification. Catalyzes the ATP-dependent 2-thiolation of cytidine in position 32 of tRNA, to form 2-thiocytidine (s(2)C32). The sulfur atoms are provided by the cysteine/cysteine desulfurase (IscS) system. This chain is tRNA-cytidine(32) 2-sulfurtransferase, found in Chromohalobacter salexigens (strain ATCC BAA-138 / DSM 3043 / CIP 106854 / NCIMB 13768 / 1H11).